The primary structure comprises 229 residues: tRNA (guanosine(18)-2'-O)-methyltransferase (229 aa).

S-adenosyl-L-methionine-binding residues include Thr96, Ile139, and Leu148.

Belongs to the class IV-like SAM-binding methyltransferase superfamily. RNA methyltransferase TrmH family.

The enzyme catalyses guanosine(18) in tRNA + S-adenosyl-L-methionine = 2'-O-methylguanosine(18) in tRNA + S-adenosyl-L-homocysteine + H(+). Its function is as follows. Catalyzes the 2'-O methylation of guanosine at position 18 in tRNA. The sequence is that of tRNA (guanosine(18)-2'-O)-methyltransferase from Escherichia coli O157:H7.